The chain runs to 154 residues: Small ribosomal subunit protein uS9 (154 aa).

Positions K135–R154 are disordered. The span at Y140–R154 shows a compositional bias: basic residues.

It belongs to the universal ribosomal protein uS9 family.

In Salinispora arenicola (strain CNS-205), this protein is Small ribosomal subunit protein uS9.